A 172-amino-acid chain; its full sequence is C-phycocyanin-2 beta subunit (172 aa).

Asn-72 is subject to N4-methylasparagine. (2R,3E)-phycocyanobilin contacts are provided by Cys-82 and Cys-153.

The protein belongs to the phycobiliprotein family. As to quaternary structure, heterodimer of an alpha and a beta subunit, which further assembles into trimers and the trimers into hexamers. In terms of processing, contains two covalently linked bilin chromophores.

It is found in the cellular thylakoid membrane. Light-harvesting photosynthetic bile pigment-protein from the phycobiliprotein complex (phycobilisome, PBS). Phycocyanin is the major phycobiliprotein in the PBS rod. This is C-phycocyanin-2 beta subunit (cpcB2) from Pseudanabaena tenuis (strain PCC 7409).